The following is a 426-amino-acid chain: Serine hydroxymethyltransferase (426 aa).

(6S)-5,6,7,8-tetrahydrofolate-binding positions include L121 and 125–127 (GHL). Position 230 is an N6-(pyridoxal phosphate)lysine (K230). 354–356 (SPF) is a (6S)-5,6,7,8-tetrahydrofolate binding site.

This sequence belongs to the SHMT family. Homodimer. Requires pyridoxal 5'-phosphate as cofactor.

It localises to the cytoplasm. The catalysed reaction is (6R)-5,10-methylene-5,6,7,8-tetrahydrofolate + glycine + H2O = (6S)-5,6,7,8-tetrahydrofolate + L-serine. It functions in the pathway one-carbon metabolism; tetrahydrofolate interconversion. It participates in amino-acid biosynthesis; glycine biosynthesis; glycine from L-serine: step 1/1. In terms of biological role, catalyzes the reversible interconversion of serine and glycine with tetrahydrofolate (THF) serving as the one-carbon carrier. This reaction serves as the major source of one-carbon groups required for the biosynthesis of purines, thymidylate, methionine, and other important biomolecules. Also exhibits THF-independent aldolase activity toward beta-hydroxyamino acids, producing glycine and aldehydes, via a retro-aldol mechanism. This Acaryochloris marina (strain MBIC 11017) protein is Serine hydroxymethyltransferase.